Reading from the N-terminus, the 165-residue chain is Nascent polypeptide-associated complex subunit alpha (165 aa).

The NAC-A/B domain maps to 14–78; the sequence is NRNEKKAREL…AKVDNFTQRL (65 aa). The region spanning 126–165 is the UBA domain; that stretch reads LSNDDIDLVVQQTNATKGQAIKALKEHNGDIVNAIMSLSK.

The protein belongs to the NAC-alpha family. Part of the nascent polypeptide-associated complex (NAC), consisting of EGD2 and EGD1. NAC associates with ribosomes via EGD1.

It localises to the cytoplasm. It is found in the nucleus. Its function is as follows. Component of the nascent polypeptide-associated complex (NAC), a dynamic component of the ribosomal exit tunnel, protecting the emerging polypeptides from interaction with other cytoplasmic proteins to ensure appropriate nascent protein targeting. The NAC complex also promotes mitochondrial protein import by enhancing productive ribosome interactions with the outer mitochondrial membrane and blocks the inappropriate interaction of ribosomes translating non-secretory nascent polypeptides with translocation sites in the membrane of the endoplasmic reticulum. EGD2 may also be involved in transcription regulation. In Candida glabrata (strain ATCC 2001 / BCRC 20586 / JCM 3761 / NBRC 0622 / NRRL Y-65 / CBS 138) (Yeast), this protein is Nascent polypeptide-associated complex subunit alpha (EGD2).